The following is a 235-amino-acid chain: Octanoyltransferase (235 aa).

The region spanning 28 to 203 (GRAEETLLLL…PFAGLPADAL (176 aa)) is the BPL/LPL catalytic domain. Substrate-binding positions include 66–73 (RGGDVTWH), 133–135 (SIG), and 146–148 (GFA). Cysteine 164 serves as the catalytic Acyl-thioester intermediate. Residues 202–235 (ALPEQPRDAVQPSSCDDVHAPSTTSRRPPCPLTV) form a disordered region.

It belongs to the LipB family.

Its subcellular location is the cytoplasm. The catalysed reaction is octanoyl-[ACP] + L-lysyl-[protein] = N(6)-octanoyl-L-lysyl-[protein] + holo-[ACP] + H(+). The protein operates within protein modification; protein lipoylation via endogenous pathway; protein N(6)-(lipoyl)lysine from octanoyl-[acyl-carrier-protein]: step 1/2. Its function is as follows. Catalyzes the transfer of endogenously produced octanoic acid from octanoyl-acyl-carrier-protein onto the lipoyl domains of lipoate-dependent enzymes. Lipoyl-ACP can also act as a substrate although octanoyl-ACP is likely to be the physiological substrate. The polypeptide is Octanoyltransferase (Geobacter sulfurreducens (strain ATCC 51573 / DSM 12127 / PCA)).